Here is a 319-residue protein sequence, read N- to C-terminus: Cobalamin biosynthesis protein CbiB (319 aa).

5 helical membrane-spanning segments follow: residues 56–76, 82–102, 153–173, 204–224, and 296–316; these read VMWVVVVGATWGVAWGVLALA, WFGWSVEVWMIFTTLAGRSLA, VDGIIAPLFFLFLGGAPLAMA, VANYLPARLSWLLLGIAAGLC, and LMWVASTLALALFIAARCGLS.

Belongs to the CobD/CbiB family.

The protein resides in the cell membrane. It functions in the pathway cofactor biosynthesis; adenosylcobalamin biosynthesis. Converts cobyric acid to cobinamide by the addition of aminopropanol on the F carboxylic group. However, the true cosubstrate could be (R)-1-amino-2-propanol O-2-phosphate, leading to cobinamide phosphate. This chain is Cobalamin biosynthesis protein CbiB, found in Salmonella paratyphi B (strain ATCC BAA-1250 / SPB7).